A 111-amino-acid chain; its full sequence is Transcription and mRNA export factor SUS1 (111 aa).

This sequence belongs to the ENY2 family. Component of the nuclear pore complex (NPC)-associated TREX-2 complex (transcription and export complex 2), composed of at least SUS1, SAC3, THP1, SEM1, and CDC31. TREX-2 contains 2 SUS1 chains. The TREX-2 complex interacts with the nucleoporin NUP1. Component of the 1.8 MDa SAGA transcription coactivator-HAT complex. SAGA is built of 5 distinct domains with specialized functions. Within the SAGA complex, SUS1, SGF11, SGF73 and UBP8 form an additional subcomplex of SAGA called the DUB module (deubiquitination module). Interacts directly with THP1, SAC3, SGF11, and with the RNA polymerase II.

Its subcellular location is the nucleus. The protein resides in the nucleoplasm. It is found in the cytoplasm. It localises to the P-body. In terms of biological role, involved in mRNA export coupled transcription activation by association with both the TREX-2 and the SAGA complexes. At the promoters, SAGA is required for recruitment of the basal transcription machinery. It influences RNA polymerase II transcriptional activity through different activities such as TBP interaction and promoter selectivity, interaction with transcription activators, and chromatin modification through histone acetylation and deubiquitination. Within the SAGA complex, participates in a subcomplex required for deubiquitination of H2B and for the maintenance of steady-state H3 methylation levels. The TREX-2 complex functions in docking export-competent ribonucleoprotein particles (mRNPs) to the nuclear entrance of the nuclear pore complex (nuclear basket). TREX-2 participates in mRNA export and accurate chromatin positioning in the nucleus by tethering genes to the nuclear periphery. May also be involved in cytoplasmic mRNA decay by interaction with components of P-bodies. The chain is Transcription and mRNA export factor SUS1 from Lodderomyces elongisporus (strain ATCC 11503 / CBS 2605 / JCM 1781 / NBRC 1676 / NRRL YB-4239) (Yeast).